We begin with the raw amino-acid sequence, 199 residues long: Altered inheritance of mitochondria protein 11 (199 aa).

Helical transmembrane passes span 79–101 (MALFYGFTVATFICSKIAYRGVI) and 129–151 (VFHSTSLAITSLGMASTGVLWYY).

This sequence belongs to the AIM11 family.

Its subcellular location is the membrane. In Komagataella phaffii (strain GS115 / ATCC 20864) (Yeast), this protein is Altered inheritance of mitochondria protein 11 (AIM11).